The chain runs to 304 residues: Oxygen-dependent coproporphyrinogen-III oxidase (304 aa).

Residue S94 participates in substrate binding. A divalent metal cation-binding residues include H98 and H108. Residue H108 is the Proton donor of the active site. Position 110 to 112 (110 to 112) interacts with substrate; sequence NVR. H147 and H177 together coordinate a divalent metal cation. The important for dimerization stretch occupies residues 242–277; that stretch reads YVEFNLVYDRGTLFGLQSGGRTESILMSLPPVAHWR. Residue 260-262 participates in substrate binding; it reads GGR.

It belongs to the aerobic coproporphyrinogen-III oxidase family. Homodimer. A divalent metal cation is required as a cofactor.

The protein localises to the cytoplasm. The enzyme catalyses coproporphyrinogen III + O2 + 2 H(+) = protoporphyrinogen IX + 2 CO2 + 2 H2O. It functions in the pathway porphyrin-containing compound metabolism; protoporphyrin-IX biosynthesis; protoporphyrinogen-IX from coproporphyrinogen-III (O2 route): step 1/1. Involved in the heme biosynthesis. Catalyzes the aerobic oxidative decarboxylation of propionate groups of rings A and B of coproporphyrinogen-III to yield the vinyl groups in protoporphyrinogen-IX. The protein is Oxygen-dependent coproporphyrinogen-III oxidase of Methylococcus capsulatus (strain ATCC 33009 / NCIMB 11132 / Bath).